The chain runs to 360 residues: Homoserine O-acetyltransferase (360 aa).

The region spanning 41 to 344 is the AB hydrolase-1 domain; the sequence is NAILICHALT…DYGHDAFLVD (304 aa). The active-site Nucleophile is Ser144. Arg213 provides a ligand contact to substrate. Residues Asp305 and His338 contribute to the active site. Asp339 contacts substrate.

The protein belongs to the AB hydrolase superfamily. MetX family. As to quaternary structure, homodimer.

The protein localises to the cytoplasm. It carries out the reaction L-homoserine + acetyl-CoA = O-acetyl-L-homoserine + CoA. Its pathway is amino-acid biosynthesis; L-methionine biosynthesis via de novo pathway; O-acetyl-L-homoserine from L-homoserine: step 1/1. Functionally, transfers an acetyl group from acetyl-CoA to L-homoserine, forming acetyl-L-homoserine. This is Homoserine O-acetyltransferase from Pasteurella multocida (strain Pm70).